A 306-amino-acid chain; its full sequence is N-acetylmuramic acid 6-phosphate etherase (306 aa).

In terms of domain architecture, SIS spans 60–223; sequence TAAALRGGGR…STGAMVRLGK (164 aa). Catalysis depends on glutamate 88, which acts as the Proton donor. Glutamate 119 is a catalytic residue.

The protein belongs to the GCKR-like family. MurNAc-6-P etherase subfamily. As to quaternary structure, homodimer.

The enzyme catalyses N-acetyl-D-muramate 6-phosphate + H2O = N-acetyl-D-glucosamine 6-phosphate + (R)-lactate. The protein operates within amino-sugar metabolism; N-acetylmuramate degradation. Specifically catalyzes the cleavage of the D-lactyl ether substituent of MurNAc 6-phosphate, producing GlcNAc 6-phosphate and D-lactate. In Gloeobacter violaceus (strain ATCC 29082 / PCC 7421), this protein is N-acetylmuramic acid 6-phosphate etherase.